Reading from the N-terminus, the 437-residue chain is 3-phosphoshikimate 1-carboxyvinyltransferase (437 aa).

3-phosphoshikimate-binding residues include K21, S22, and R26. K21 serves as a coordination point for phosphoenolpyruvate. Phosphoenolpyruvate contacts are provided by G101 and R129. 3-phosphoshikimate is bound by residues S172, S173, Q174, S200, D314, and K341. Phosphoenolpyruvate is bound at residue Q174. The active-site Proton acceptor is the D314. Phosphoenolpyruvate contacts are provided by R345, R388, and K414.

It belongs to the EPSP synthase family. As to quaternary structure, monomer.

It is found in the cytoplasm. The catalysed reaction is 3-phosphoshikimate + phosphoenolpyruvate = 5-O-(1-carboxyvinyl)-3-phosphoshikimate + phosphate. It functions in the pathway metabolic intermediate biosynthesis; chorismate biosynthesis; chorismate from D-erythrose 4-phosphate and phosphoenolpyruvate: step 6/7. Its function is as follows. Catalyzes the transfer of the enolpyruvyl moiety of phosphoenolpyruvate (PEP) to the 5-hydroxyl of shikimate-3-phosphate (S3P) to produce enolpyruvyl shikimate-3-phosphate and inorganic phosphate. This Clostridioides difficile (strain 630) (Peptoclostridium difficile) protein is 3-phosphoshikimate 1-carboxyvinyltransferase.